The following is a 339-amino-acid chain: UDP-N-acetylenolpyruvoylglucosamine reductase (339 aa).

The FAD-binding PCMH-type domain occupies 19-189 (VDVQARLFAE…LRVRFKLSRV (171 aa)). The active site involves Arg166. The active-site Proton donor is Ser239. Glu335 is a catalytic residue.

Belongs to the MurB family. Requires FAD as cofactor.

Its subcellular location is the cytoplasm. The catalysed reaction is UDP-N-acetyl-alpha-D-muramate + NADP(+) = UDP-N-acetyl-3-O-(1-carboxyvinyl)-alpha-D-glucosamine + NADPH + H(+). It participates in cell wall biogenesis; peptidoglycan biosynthesis. In terms of biological role, cell wall formation. This chain is UDP-N-acetylenolpyruvoylglucosamine reductase, found in Pseudomonas savastanoi pv. phaseolicola (strain 1448A / Race 6) (Pseudomonas syringae pv. phaseolicola (strain 1448A / Race 6)).